A 145-amino-acid chain; its full sequence is 3-hydroxyacyl-[acyl-carrier-protein] dehydratase FabZ (145 aa).

The active site involves H49.

It belongs to the thioester dehydratase family. FabZ subfamily.

It is found in the cytoplasm. The catalysed reaction is a (3R)-hydroxyacyl-[ACP] = a (2E)-enoyl-[ACP] + H2O. Functionally, involved in unsaturated fatty acids biosynthesis. Catalyzes the dehydration of short chain beta-hydroxyacyl-ACPs and long chain saturated and unsaturated beta-hydroxyacyl-ACPs. This is 3-hydroxyacyl-[acyl-carrier-protein] dehydratase FabZ from Rickettsia africae (strain ESF-5).